Reading from the N-terminus, the 243-residue chain is Nuclear ubiquitous casein and cyclin-dependent kinase substrate 1 (243 aa).

The segment at 1 to 243 (MSRPVRNRKV…SEDDAQSGED (243 aa)) is disordered. Tyr-13 is subject to Phosphotyrosine. 2 positions are modified to phosphoserine: Ser-14 and Ser-19. Tyr-26 carries the phosphotyrosine modification. The span at 35–51 (KKIRSSPREAKNKRRSG) shows a compositional bias: basic residues. 6 positions are modified to phosphoserine: Ser-54, Ser-58, Ser-61, Ser-73, Ser-75, and Ser-79. The span at 64-77 (KDVKTKKDDSHSAE) shows a compositional bias: basic and acidic residues. Residues 91-100 (QQRQAASKAA) show a composition bias toward low complexity. Acidic residues predominate over residues 111–124 (VGSEEEQEEEDEAP). Ser-113, Ser-130, Ser-132, and Ser-144 each carry phosphoserine. The segment covering 132–145 (SDEDFLVEDDDDSD) has biased composition (acidic residues). Residues 149–174 (SKKKNKKMVKKSKPERKEKKMPKPRL) are compositionally biased toward basic residues. Position 179 is a phosphothreonine (Thr-179). Position 181 is a phosphoserine (Ser-181). Basic and acidic residues predominate over residues 197–206 (ASKEKTPSPK). A Phosphothreonine modification is found at Thr-202. Ser-204, Ser-214, Ser-223, Ser-229, Ser-234, and Ser-240 each carry phosphoserine. The span at 232–243 (EGSEDDAQSGED) shows a compositional bias: acidic residues.

As to quaternary structure, does not interact with RAD51. In terms of processing, phosphorylated in an ATM-dependent manner in response to DNA damage. Phosphorylated by CDK1 and casein kinase.

Its subcellular location is the nucleus. It localises to the chromosome. Functionally, chromatin-associated protein involved in DNA repair by promoting homologous recombination (HR). Binds double-stranded DNA (dsDNA) and secondary DNA structures, such as D-loop structures, but with less affinity than RAD51AP1. This Bos taurus (Bovine) protein is Nuclear ubiquitous casein and cyclin-dependent kinase substrate 1 (NUCKS1).